The sequence spans 313 residues: Pyrimidine-specific ribonucleoside hydrolase RihB (313 aa).

The Proton acceptor role is filled by aspartate 11. Residues aspartate 11, aspartate 16, and valine 124 each contribute to the Ca(2+) site. Substrate contacts are provided by glutamine 227 and histidine 239. Residue aspartate 240 coordinates Ca(2+).

This sequence belongs to the IUNH family. RihB subfamily. Homotetramer. The cofactor is Ca(2+).

The catalysed reaction is a pyrimidine ribonucleoside + H2O = a pyrimidine nucleobase + D-ribose. In terms of biological role, hydrolyzes cytidine or uridine to ribose and cytosine or uracil, respectively. Has a clear preference for cytidine over uridine. Strictly specific for ribonucleosides. The protein is Pyrimidine-specific ribonucleoside hydrolase RihB of Escherichia coli (strain SE11).